Here is a 6306-residue protein sequence, read N- to C-terminus: Adhesion G-protein coupled receptor V1 (6306 aa).

The N-terminal stretch at 1-29 is a signal peptide; that stretch reads MSVFLGPGMPSASLLVNLLSALLILFVFG. Calx-beta domains follow at residues 30 to 117, 133 to 237, 262 to 362, 388 to 488, 645 to 745, 763 to 861, 876 to 979, 993 to 1093, 1108 to 1208, 1444 to 1544, 1564 to 1665, 1710 to 1809, 1850 to 1952, 1966 to 2079, 2107 to 2206, 2222 to 2324, 2441 to 2541, 2584 to 2676, 2689 to 2789, 2814 to 2925, 2947 to 3048, and 3063 to 3172; these read ETEI…FHLT, VTVT…IQLK, PVRF…HIML, KPYG…LQIL, PAIA…TLSL, DLII…VVLS, VNIT…VILL, ATLR…IILL, TVII…LKLV, AMPR…FILK, TIQK…RVTL, TGLP…VELL, ILVT…VSVL, TLTV…IELL, QLII…VQLM, VIII…VQLT, TLCL…FLIS, NISP…VSLV, DTVR…QVIL, LTVE…VNLT, TAQV…LILT, and LIIV…CTLF. Topologically, residues 30-5908 are extracellular; that stretch reads ETEIRFTGQT…TDNLSSYNEA (5879 aa). EAR repeat units lie at residues 3255 to 3296, 3297 to 3345, 3348 to 3393, 3395 to 3439, 3441 to 3488, and 3492 to 3534; these read VFSV…RWQG, IFIP…TFTS, KLFL…RWNG, SFVL…RWSG, GFIN…IWEM, and SFRY…CWNS. 13 consecutive Calx-beta domains span residues 3525-3625, 3639-3739, 3775-3875, 3899-4006, 4020-4123, 4139-4239, 4255-4354, 4387-4489, 4512-4612, 4634-4734, 4992-5095, 5288-5332, and 5368-5468; these read DMSA…KVQL, SVTI…IVTL, GLVG…VTIT, AEIM…ISLI, VTVV…IQLI, IIIR…EFQL, ANIT…LTIT, RIII…ILLT, SPFG…IIKL, EFGD…VIQL, SGFI…INLT, AVEE…YVFL, and IGFS…FVEL. Positions 5747 to 5903 constitute a GAIN-B domain; the sequence is SILALHWYPQ…AVYARTDNLS (157 aa). 2 disulfides stabilise this stretch: Cys5856–Cys5885 and Cys5873–Cys5887. The segment at 5856 to 5903 is GPS; the sequence is CLLWNQAAASWLSDSQFCKVVEETADYVECACSHMSVYAVYARTDNLS. Residues 5909–5929 traverse the membrane as a helical segment; that stretch reads FFTSGFICISGLCLAVLSHIF. At 5930–5939 the chain is on the cytoplasmic side; the sequence is CARYSMFAAK. The helical transmembrane segment at 5940-5960 threads the bilayer; it reads LLTHMMAASLGTQILFLASAY. Over 5961–5979 the chain is Extracellular; sequence ASPQLAEESCSAMAAVTHY. Residues 5980–6000 form a helical membrane-spanning segment; the sequence is LYLCQFSWMLIQSVNFWYVLV. Over 6001–6010 the chain is Cytoplasmic; sequence MNDEHTERRY. Residues 6011 to 6031 traverse the membrane as a helical segment; the sequence is LLFFLLSWGLPAFVVILLIVI. Topologically, residues 6032-6059 are extracellular; sequence LKGIYHQSMSQIYGLIHGDLCFIPNVYA. A helical membrane pass occupies residues 6060 to 6080; that stretch reads ALFTAALVPLTCLVVVFVVFI. Residues 6081–6104 lie on the Cytoplasmic side of the membrane; sequence HAYQVKPQWKAYDDVFRGRTNAAE. The chain crosses the membrane as a helical span at residues 6105–6125; it reads IPLILYLFALISVTWLWGGLH. Residues 6126–6133 lie on the Extracellular side of the membrane; the sequence is MAYRHFWM. Residues 6134–6154 traverse the membrane as a helical segment; sequence LVLFVIFNSLQGLYVFMVYFI. Topologically, residues 6155–6306 are cytoplasmic; sequence LHNQMCCPMK…RRIPIADTHL (152 aa). The disordered stretch occupies residues 6216–6248; the sequence is ASFQQGSQASPDLKPSPQNGATFPSSGGYGQGS. A compositionally biased stretch (polar residues) spans 6217–6240; it reads SFQQGSQASPDLKPSPQNGATFPS.

It belongs to the G-protein coupled receptor 2 family. Adhesion G-protein coupled receptor (ADGR) subfamily. Forms a heterodimer, consisting of a large extracellular region (alpha subunit) non-covalently linked to a seven-transmembrane moiety (beta subunit). Component of USH2 complex, composed of ADGRV1, PDZD7, USH2A and WHRN. Interacts with USH2A and WHRN. Interacts (via the cytoplasmic region) with PDZD7. Interacts (via the cytoplasmic region) with MYO7A (via MyTH4-FERM domains). In terms of processing, autoproteolytically cleaved into 2 subunits, an extracellular alpha subunit and a seven-transmembrane subunit. In terms of tissue distribution, expressed at low levels in adult tissues.

It is found in the cell membrane. Its subcellular location is the cell projection. The protein localises to the stereocilium membrane. The protein resides in the photoreceptor inner segment. G-protein coupled receptor which has an essential role in the development of hearing and vision. Couples to G-alpha(i)-proteins, GNAI1/2/3, G-alpha(q)-proteins, GNAQ, as well as G-alpha(s)-proteins, GNAS, inhibiting adenylate cyclase (AC) activity and cAMP production. Required for the hair bundle ankle formation, which connects growing stereocilia in developing cochlear hair cells of the inner ear. In response to extracellular calcium, activates kinases PKA and PKC to regulate myelination by inhibiting the ubiquitination of MAG, thus enhancing the stability of this protein in myelin-forming cells of the auditory pathway. In retina photoreceptors, the USH2 complex is required for the maintenance of periciliary membrane complex that seems to play a role in regulating intracellular protein transport. Involved in the regulation of bone metabolism. In terms of biological role, cleaved ADGRV1 beta-subunit couples with G-alpha(i)-proteins, GNAI1/2/3, and constitutively inhibits adenylate cyclase (AC) activity with a stronger effect than full ADGRV1. This is Adhesion G-protein coupled receptor V1 from Homo sapiens (Human).